A 389-amino-acid chain; its full sequence is S-adenosylmethionine synthase (389 aa).

Residue His-17 coordinates ATP. Asp-19 contacts Mg(2+). K(+) is bound at residue Glu-45. 2 residues coordinate L-methionine: Glu-58 and Gln-102. Positions 102–112 (QSADIAQGVDA) are flexible loop. ATP-binding positions include 167–169 (DAK), Asp-241, 247–248 (RK), Ala-264, and Lys-268. Asp-241 provides a ligand contact to L-methionine. An L-methionine-binding site is contributed by Lys-272.

This sequence belongs to the AdoMet synthase family. Homotetramer; dimer of dimers. It depends on Mg(2+) as a cofactor. Requires K(+) as cofactor.

Its subcellular location is the cytoplasm. It catalyses the reaction L-methionine + ATP + H2O = S-adenosyl-L-methionine + phosphate + diphosphate. It participates in amino-acid biosynthesis; S-adenosyl-L-methionine biosynthesis; S-adenosyl-L-methionine from L-methionine: step 1/1. Functionally, catalyzes the formation of S-adenosylmethionine (AdoMet) from methionine and ATP. The overall synthetic reaction is composed of two sequential steps, AdoMet formation and the subsequent tripolyphosphate hydrolysis which occurs prior to release of AdoMet from the enzyme. This chain is S-adenosylmethionine synthase, found in Parvibaculum lavamentivorans (strain DS-1 / DSM 13023 / NCIMB 13966).